Reading from the N-terminus, the 538-residue chain is Metal transporter Nramp5 (538 aa).

Transmembrane regions (helical) follow at residues 44–64 (FLAHVGPGFMVSLAYLDPGNL), 77–97 (ELLWVILIGLIFALIIQSLAA), 118–138 (FVKIFLWLLAELAVIAADIPE), 140–160 (IGTAFAFNILFHIPVWVGVLI), 181–201 (FLISMLVFVMAACFFGELSIV), 227–247 (IALLGALVMPHNLFLHSALVL), 264–284 (FFLYESGFALFVALLINIAVV), 324–346 (SAIVYGVALLASGQSSTITGTYA), 365–385 (NLMTRTIAIAPSLIVSIIGGS), 391–411 (LIIIASMILSFELPFALIPLL), 427–447 (IYIIVFSWFLGLLIIGINMYF), and 467–487 (VLVGAAVFPFMLVYIVAVVYL). The disordered stretch occupies residues 518 to 538 (AVDDDEPLPYRDDLADIPLPR).

This sequence belongs to the NRAMP (TC 2.A.55) family.

The protein localises to the membrane. Its function is as follows. Probable metal transporter. The chain is Metal transporter Nramp5 (NRAMP5) from Oryza sativa subsp. japonica (Rice).